The primary structure comprises 161 residues: Alpha-crystallin A chain (161 aa).

Residues 1–51 (ALGPFYPSRXXXXXXXXXXXXXXXXXXXXXXXXXXXXQSLFRTVLDSGISE) are required for complex formation with BFSP1 and BFSP2. Q38 is subject to Deamidated glutamine; partial. The sHSP domain maps to 40 to 150 (LFRTVLDSGI…SHSERAIPVS (111 aa)). K87 is subject to N6-acetyllysine. H88 contacts Zn(2+). N89 carries the post-translational modification Deamidated asparagine; partial. Zn(2+)-binding residues include E90 and H95. S110 is subject to Phosphoserine. A Deamidated asparagine; partial modification is found at N111. Cysteines 119 and 130 form a disulfide. Q135 is modified (deamidated glutamine; partial). The interval 140-161 (ASHSERAIPVSREEKPSSAPSS) is disordered. The segment covering 141–155 (SHSERAIPVSREEKP) has biased composition (basic and acidic residues). H142 serves as a coordination point for Zn(2+). Residue S150 is glycosylated (O-linked (GlcNAc) serine).

This sequence belongs to the small heat shock protein (HSP20) family. As to quaternary structure, heteromer composed of three CRYAA and one CRYAB subunits. Inter-subunit bridging via zinc ions enhances stability, which is crucial as there is no protein turn over in the lens. Can also form homodimers and homotetramers (dimers of dimers) which serve as the building blocks of homooligomers. Within homooligomers, the zinc-binding motif is created from residues of 3 different molecules. His-88 and Glu-90 from one molecule are ligands of the zinc ion, and His-95 and His-142 residues from additional molecules complete the site with tetrahedral coordination geometry. Part of a complex required for lens intermediate filament formation composed of BFSP1, BFSP2 and CRYAA. In terms of processing, undergoes age-dependent proteolytical cleavage at the C-terminus.

The protein resides in the cytoplasm. The protein localises to the nucleus. Contributes to the transparency and refractive index of the lens. In its oxidized form (absence of intramolecular disulfide bond), acts as a chaperone, preventing aggregation of various proteins under a wide range of stress conditions. Required for the correct formation of lens intermediate filaments as part of a complex composed of BFSP1, BFSP2 and CRYAA. The chain is Alpha-crystallin A chain (CRYAA) from Galegeeska rufescens (East African rufous sengi).